Reading from the N-terminus, the 142-residue chain is Galactose-6-phosphate isomerase subunit LacA (142 aa).

The protein belongs to the LacAB/RpiB family. In terms of assembly, heteromultimeric protein consisting of LacA and LacB.

The enzyme catalyses aldehydo-D-galactose 6-phosphate = keto-D-tagatose 6-phosphate. It participates in carbohydrate metabolism; D-galactose 6-phosphate degradation; D-tagatose 6-phosphate from D-galactose 6-phosphate: step 1/1. The polypeptide is Galactose-6-phosphate isomerase subunit LacA (Staphylococcus haemolyticus (strain JCSC1435)).